A 143-amino-acid polypeptide reads, in one-letter code: Nucleoside diphosphate kinase (143 aa).

The ATP site is built by lysine 11, phenylalanine 59, arginine 87, threonine 93, arginine 104, and asparagine 114. Catalysis depends on histidine 117, which acts as the Pros-phosphohistidine intermediate.

It belongs to the NDK family. Homotetramer. Requires Mg(2+) as cofactor.

It is found in the cytoplasm. The enzyme catalyses a 2'-deoxyribonucleoside 5'-diphosphate + ATP = a 2'-deoxyribonucleoside 5'-triphosphate + ADP. It carries out the reaction a ribonucleoside 5'-diphosphate + ATP = a ribonucleoside 5'-triphosphate + ADP. Major role in the synthesis of nucleoside triphosphates other than ATP. The ATP gamma phosphate is transferred to the NDP beta phosphate via a ping-pong mechanism, using a phosphorylated active-site intermediate. This is Nucleoside diphosphate kinase from Sodalis glossinidius (strain morsitans).